We begin with the raw amino-acid sequence, 294 residues long: Acetyl-coenzyme A carboxylase carboxyl transferase subunit beta (294 aa).

One can recognise a CoA carboxyltransferase N-terminal domain in the interval 27-294 (LWHKCPSCDA…PSPVALPVTA (268 aa)). Cysteine 31, cysteine 34, cysteine 50, and cysteine 53 together coordinate Zn(2+). The segment at 31–53 (CPSCDAVLYRPELEKTLDVCPKC) adopts a C4-type zinc-finger fold.

It belongs to the AccD/PCCB family. Acetyl-CoA carboxylase is a heterohexamer composed of biotin carboxyl carrier protein (AccB), biotin carboxylase (AccC) and two subunits each of ACCase subunit alpha (AccA) and ACCase subunit beta (AccD). Zn(2+) serves as cofactor.

It localises to the cytoplasm. The catalysed reaction is N(6)-carboxybiotinyl-L-lysyl-[protein] + acetyl-CoA = N(6)-biotinyl-L-lysyl-[protein] + malonyl-CoA. The protein operates within lipid metabolism; malonyl-CoA biosynthesis; malonyl-CoA from acetyl-CoA: step 1/1. In terms of biological role, component of the acetyl coenzyme A carboxylase (ACC) complex. Biotin carboxylase (BC) catalyzes the carboxylation of biotin on its carrier protein (BCCP) and then the CO(2) group is transferred by the transcarboxylase to acetyl-CoA to form malonyl-CoA. This is Acetyl-coenzyme A carboxylase carboxyl transferase subunit beta from Ectopseudomonas mendocina (strain ymp) (Pseudomonas mendocina).